A 106-amino-acid chain; its full sequence is UPF0145 protein Nmul_A0734 (106 aa).

It belongs to the UPF0145 family.

The sequence is that of UPF0145 protein Nmul_A0734 from Nitrosospira multiformis (strain ATCC 25196 / NCIMB 11849 / C 71).